Reading from the N-terminus, the 334-residue chain is RNA ligase 2 (334 aa).

The segment at 1–234 (MFKKYSSLEN…KCKNSKFSEK (234 aa)) is adenylyltransferase. AMP contacts are provided by glutamate 34, lysine 35, isoleucine 36, asparagine 40, arginine 55, and glutamate 99. Residue lysine 35 is the N6-AMP-lysine intermediate of the active site. Mg(2+)-binding residues include isoleucine 162, leucine 164, asparagine 166, glutamate 204, and tyrosine 206. AMP-binding residues include lysine 225 and lysine 227.

Belongs to the RNA ligase 2 family. The cofactor is Mg(2+). Requires Mn(2+) as cofactor.

The enzyme catalyses ATP + (ribonucleotide)n-3'-hydroxyl + 5'-phospho-(ribonucleotide)m = (ribonucleotide)n+m + AMP + diphosphate.. In terms of biological role, repairs 3'-OH/5'-PO4 nicks in duplex RNA or RNA:DNA hybrid in which the broken 3'-OH strand is RNA. The nick ligation reaction entails three nucleotidyl transfer steps. In the first step, the RNA ligase reacts with ATP in the absence of nucleic acid to form a covalent ligase-AMP intermediate and release pyrophosphate. In step 2, the ligase-AMP binds to the nicked duplex nucleic acid and transfers the adenylate to the 5'-PO4 terminus to form an adenylylated nicked intermediate. In step 3, the RNA ligase directs the attack of the nick 3'-OH on the 5'-phosphoanhydride linkage, resulting in a repaired 3' - 5' phosphodiester and release of AMP. The polypeptide is RNA ligase 2 (Y10A) (Enterobacteria phage T4 (Bacteriophage T4)).